The chain runs to 125 residues: Small ribosomal subunit protein bS6m (125 aa).

This sequence belongs to the bacterial ribosomal protein bS6 family. Component of the mitochondrial small ribosomal subunit (mt-SSU). Mature mammalian 55S mitochondrial ribosomes consist of a small (28S) and a large (39S) subunit. The 28S small subunit contains a 12S ribosomal RNA (12S mt-rRNA) and 30 different proteins. The 39S large subunit contains a 16S rRNA (16S mt-rRNA), a copy of mitochondrial valine transfer RNA (mt-tRNA(Val)), which plays an integral structural role, and 52 different proteins.

Its subcellular location is the mitochondrion. This is Small ribosomal subunit protein bS6m (MRPS6) from Homo sapiens (Human).